Reading from the N-terminus, the 340-residue chain is Arginase 1, mitochondrial (340 aa).

The N-terminal 24 residues, 1–24 (MGGVAAGTRWIHHVRRLSAAKVSA), are a transit peptide targeting the mitochondrion. Residues His-159, Asp-183, His-185, and Asp-187 each coordinate Mn(2+). Substrate contacts are provided by residues 185-189 (HPDIY) and 193-195 (EGN). Residues Asp-268 and Asp-270 each coordinate Mn(2+). Glu-311 is a substrate binding site.

This sequence belongs to the arginase family. Requires Mn(2+) as cofactor.

The protein resides in the mitochondrion. It catalyses the reaction L-arginine + H2O = urea + L-ornithine. The protein operates within nitrogen metabolism; urea cycle; L-ornithine and urea from L-arginine: step 1/1. Its function is as follows. Catalyzes the hydrolysis of L-arginine to urea and L-ornithine. The latter can be utilized in the urea cycle or as a precursor for the synthesis of both polyamines and proline. The sequence is that of Arginase 1, mitochondrial (ARG1) from Oryza sativa subsp. japonica (Rice).